A 405-amino-acid polypeptide reads, in one-letter code: Acetate kinase (405 aa).

Residue N7 participates in Mg(2+) binding. K14 contacts ATP. Substrate is bound at residue R92. The Proton donor/acceptor role is filled by D149. ATP-binding positions include 209–213 and 284–286; these read HLGNG and DMR. Position 389 (E389) interacts with Mg(2+).

Belongs to the acetokinase family. In terms of assembly, homodimer. Mg(2+) is required as a cofactor. It depends on Mn(2+) as a cofactor.

It localises to the cytoplasm. The enzyme catalyses acetate + ATP = acetyl phosphate + ADP. The protein operates within metabolic intermediate biosynthesis; acetyl-CoA biosynthesis; acetyl-CoA from acetate: step 1/2. Its function is as follows. Catalyzes the formation of acetyl phosphate from acetate and ATP. Can also catalyze the reverse reaction. In Borrelia garinii subsp. bavariensis (strain ATCC BAA-2496 / DSM 23469 / PBi) (Borreliella bavariensis), this protein is Acetate kinase.